A 156-amino-acid polypeptide reads, in one-letter code: S-ribosylhomocysteine lyase (156 aa).

Fe cation is bound by residues His56, His60, and Cys123.

This sequence belongs to the LuxS family. Homodimer. Fe cation is required as a cofactor.

The enzyme catalyses S-(5-deoxy-D-ribos-5-yl)-L-homocysteine = (S)-4,5-dihydroxypentane-2,3-dione + L-homocysteine. In terms of biological role, involved in the synthesis of autoinducer 2 (AI-2) which is secreted by bacteria and is used to communicate both the cell density and the metabolic potential of the environment. The regulation of gene expression in response to changes in cell density is called quorum sensing. Catalyzes the transformation of S-ribosylhomocysteine (RHC) to homocysteine (HC) and 4,5-dihydroxy-2,3-pentadione (DPD). This is S-ribosylhomocysteine lyase from Staphylococcus haemolyticus (strain JCSC1435).